The sequence spans 114 residues: Ribonuclease P protein component (114 aa).

The protein belongs to the RnpA family. Consists of a catalytic RNA component (M1 or rnpB) and a protein subunit.

The catalysed reaction is Endonucleolytic cleavage of RNA, removing 5'-extranucleotides from tRNA precursor.. In terms of biological role, RNaseP catalyzes the removal of the 5'-leader sequence from pre-tRNA to produce the mature 5'-terminus. It can also cleave other RNA substrates such as 4.5S RNA. The protein component plays an auxiliary but essential role in vivo by binding to the 5'-leader sequence and broadening the substrate specificity of the ribozyme. The chain is Ribonuclease P protein component from Borrelia hermsii (strain HS1 / DAH).